Consider the following 397-residue polypeptide: 4-O-methyl-glucuronoyl methylesterase (397 aa).

The first 18 residues, 1 to 18, serve as a signal peptide directing secretion; sequence MVHLTSALLVAGAAFAAA. 3 cysteine pairs are disulfide-bonded: C31-C65, C212-C347, and C244-C319. The short motif at 211-216 is the GXSYXG catalytic site motif element; sequence GCSRNG. S213 (nucleophile) is an active-site residue. Residues K217, Q259, E267, and W310 each coordinate substrate. H346 serves as the catalytic Proton donor/acceptor.

The protein belongs to the carbohydrate esterase 15 (CE15) family.

It is found in the secreted. It carries out the reaction a 4-O-methyl-alpha-D-glucuronosyl ester derivative + H2O = 4-O-methyl-alpha-D-glucuronate derivative + an alcohol + H(+). Its function is as follows. Glucuronoyl esterase which may play a significant role in biomass degradation, as it is considered to disconnect hemicellulose from lignin through the hydrolysis of the ester bond between 4-O-methyl-D-glucuronic acid residues of glucuronoxylans and aromatic alcohols of lignin. The chain is 4-O-methyl-glucuronoyl methylesterase (ge2) from Thermothelomyces thermophilus (strain ATCC 42464 / BCRC 31852 / DSM 1799) (Sporotrichum thermophile).